An 844-amino-acid polypeptide reads, in one-letter code: DNA mismatch repair protein MutS (844 aa).

602–609 (GPNMSGKS) is an ATP binding site.

This sequence belongs to the DNA mismatch repair MutS family.

In terms of biological role, this protein is involved in the repair of mismatches in DNA. It is possible that it carries out the mismatch recognition step. This protein has a weak ATPase activity. This chain is DNA mismatch repair protein MutS, found in Streptococcus pneumoniae (strain ATCC 700669 / Spain 23F-1).